The primary structure comprises 390 residues: L-seryl-tRNA(Sec) selenium transferase (390 aa).

Position 225 is an N6-(pyridoxal phosphate)lysine (lysine 225).

The protein belongs to the SelA family. The cofactor is pyridoxal 5'-phosphate.

The protein localises to the cytoplasm. It catalyses the reaction L-seryl-tRNA(Sec) + selenophosphate + H(+) = L-selenocysteinyl-tRNA(Sec) + phosphate. Its pathway is aminoacyl-tRNA biosynthesis; selenocysteinyl-tRNA(Sec) biosynthesis; selenocysteinyl-tRNA(Sec) from L-seryl-tRNA(Sec) (bacterial route): step 1/1. Functionally, converts seryl-tRNA(Sec) to selenocysteinyl-tRNA(Sec) required for selenoprotein biosynthesis. The protein is L-seryl-tRNA(Sec) selenium transferase of Helicobacter pylori (strain P12).